The primary structure comprises 222 residues: Kunitz trypsin inhibitor 3 (222 aa).

The first 23 residues, 1–23 (MEKLTLSFITLTVLSAIFTAASA), serve as a signal peptide directing secretion. Asn-65 carries an N-linked (GlcNAc...) asparagine glycan. 2 disulfide bridges follow: Cys-72-Cys-119 and Cys-165-Cys-173. Asn-175 carries N-linked (GlcNAc...) asparagine glycosylation.

Belongs to the protease inhibitor I3 (leguminous Kunitz-type inhibitor) family.

Its function is as follows. Exhibits Kunitz trypsin protease inhibitor activity. This is Kunitz trypsin inhibitor 3 from Arabidopsis thaliana (Mouse-ear cress).